The chain runs to 335 residues: Beta-ketoacyl-[acyl-carrier-protein] synthase III (335 aa).

Residues C118 and H259 contribute to the active site. The tract at residues 260-264 (QANER) is ACP-binding. The active site involves N289.

It belongs to the thiolase-like superfamily. FabH family. In terms of assembly, homodimer.

It localises to the cytoplasm. The enzyme catalyses malonyl-[ACP] + acetyl-CoA + H(+) = 3-oxobutanoyl-[ACP] + CO2 + CoA. The protein operates within lipid metabolism; fatty acid biosynthesis. Its function is as follows. Catalyzes the condensation reaction of fatty acid synthesis by the addition to an acyl acceptor of two carbons from malonyl-ACP. Catalyzes the first condensation reaction which initiates fatty acid synthesis and may therefore play a role in governing the total rate of fatty acid production. Possesses both acetoacetyl-ACP synthase and acetyl transacylase activities. Its substrate specificity determines the biosynthesis of branched-chain and/or straight-chain of fatty acids. The protein is Beta-ketoacyl-[acyl-carrier-protein] synthase III of Chlamydia caviae (strain ATCC VR-813 / DSM 19441 / 03DC25 / GPIC) (Chlamydophila caviae).